Consider the following 415-residue polypeptide: Casein kinase I isoform delta (415 aa).

The Protein kinase domain maps to 9-277 (YRLGRKIGSG…YLRQLFRNLF (269 aa)). ATP contacts are provided by residues 15-23 (IGSGSFGDI) and K38. The active-site Proton acceptor is D128. A centrosomal localization signal (CLS) region spans residues 278-364 (HRQGFSYDYV…TSPRPVSGME (87 aa)). The segment covering 301–315 (ADDAERERRDREERL) has biased composition (basic and acidic residues). Residues 301-415 (ADDAERERRD…SSGLQSVVHR (115 aa)) form a disordered region. The autoinhibitory stretch occupies residues 317 to 342 (HSRNPATRGLPSTASGRLRGTQEVAP). S328 and S331 each carry phosphoserine. Residues 347 to 358 (TPTSHTANTSPR) are compositionally biased toward polar residues. The residue at position 370 (S370) is a Phosphoserine. Residue R375 is modified to Omega-N-methylarginine. A compositionally biased stretch (polar residues) spans 380–400 (NISSSDLTGRQDTSRMSTSQI). Phosphoserine occurs at positions 382, 383, 384, 407, and 411.

Belongs to the protein kinase superfamily. CK1 Ser/Thr protein kinase family. Casein kinase I subfamily. In terms of assembly, monomer. Component of the circadian core oscillator, which includes the CRY proteins, CLOCK, or NPAS2, ARTNL/BMAL1 or ARTNL2/BMAL2, CSNK1D and/or CSNK1E, TIMELESS and the PER proteins. Interacts with DNMT1 and MAP1A. Interacts directly with PER1 and PER2 which may lead to their degradation. Interacts with MAPT/TAU, SNAPIN, DBNDD2, AIB1/NCOA3 and ESR1. Interacts with AKAP9/AKAP450; this interaction promotes centrosomal subcellular location. Binds to tubulins in mitotic cells upon DNA damage. Interacts with GJA1. Interacts with DDX3X; this interaction enhances CSNK1D kinase activity in vitro, but it is unclear whether this interaction is physiologically relevant. Interacts with FAM83A, FAM83B, FAM83E and FAM83H (via DUF1669). Autophosphorylated on serine and threonine residues; this autophosphorylation represses activity. Reactivated by phosphatase-mediated dephosphorylation. May be dephosphorylated by PP1.

It is found in the cytoplasm. It localises to the nucleus. Its subcellular location is the cytoskeleton. The protein resides in the microtubule organizing center. The protein localises to the centrosome. It is found in the perinuclear region. It localises to the cell membrane. Its subcellular location is the spindle. The protein resides in the golgi apparatus. The catalysed reaction is L-seryl-[protein] + ATP = O-phospho-L-seryl-[protein] + ADP + H(+). It catalyses the reaction L-threonyl-[protein] + ATP = O-phospho-L-threonyl-[protein] + ADP + H(+). The enzyme catalyses L-seryl-[tau protein] + ATP = O-phospho-L-seryl-[tau protein] + ADP + H(+). It carries out the reaction L-threonyl-[tau protein] + ATP = O-phospho-L-threonyl-[tau protein] + ADP + H(+). Its activity is regulated as follows. Drug-mediated inhibition leads to a delay of the oscillations with the magnitude of this effect dependent upon the timing of drug administration. Inhibited by phosphorylation. Exhibits substrate-dependent heparin activation. In terms of biological role, essential serine/threonine-protein kinase that regulates diverse cellular growth and survival processes including Wnt signaling, DNA repair and circadian rhythms. It can phosphorylate a large number of proteins. Casein kinases are operationally defined by their preferential utilization of acidic proteins such as caseins as substrates. Phosphorylates connexin-43/GJA1, MAP1A, SNAPIN, MAPT/TAU, TOP2A, DCK, HIF1A, EIF6, p53/TP53, DVL2, DVL3, ESR1, AIB1/NCOA3, DNMT1, PKD2, YAP1, PER1 and PER2. Central component of the circadian clock. In balance with PP1, determines the circadian period length through the regulation of the speed and rhythmicity of PER1 and PER2 phosphorylation. Controls PER1 and PER2 nuclear transport and degradation. YAP1 phosphorylation promotes its SCF(beta-TRCP) E3 ubiquitin ligase-mediated ubiquitination and subsequent degradation. DNMT1 phosphorylation reduces its DNA-binding activity. Phosphorylation of ESR1 and AIB1/NCOA3 stimulates their activity and coactivation. Phosphorylation of DVL2 and DVL3 regulates WNT3A signaling pathway that controls neurite outgrowth. Phosphorylates NEDD9/HEF1. EIF6 phosphorylation promotes its nuclear export. Triggers down-regulation of dopamine receptors in the forebrain. Activates DCK in vitro by phosphorylation. TOP2A phosphorylation favors DNA cleavable complex formation. May regulate the formation of the mitotic spindle apparatus in extravillous trophoblast. Modulates connexin-43/GJA1 gap junction assembly by phosphorylation. Probably involved in lymphocyte physiology. Regulates fast synaptic transmission mediated by glutamate. The polypeptide is Casein kinase I isoform delta (CSNK1D) (Bos taurus (Bovine)).